The chain runs to 339 residues: Protein RETICULATA-RELATED 2, chloroplastic (339 aa).

Residues 1-58 (MAAMAAKLHISTKSDQSNVRLPRLINLSRDPTARVLFPRNGSVSSLHTNFSSPNIMVP) constitute a chloroplast transit peptide. Residues 68-86 (IGNHGGGSGSGGGGGGYGG) show a composition bias toward gly residues. The tract at residues 68 to 92 (IGNHGGGSGSGGGGGGYGGSEEEES) is disordered. 2 consecutive transmembrane segments (helical) span residues 148–168 (FVFSTLVVGSILNFTLMYLLA) and 213–233 (VFATVGLAAGLVGTAISNGLI).

It belongs to the RETICULATA family.

Its subcellular location is the plastid. The protein resides in the chloroplast membrane. Its function is as follows. May play a role in leaf development. This is Protein RETICULATA-RELATED 2, chloroplastic from Arabidopsis thaliana (Mouse-ear cress).